Here is a 352-residue protein sequence, read N- to C-terminus: Photosystem II D2 protein (352 aa).

Over 1-31 the chain is Cytoplasmic; sequence MTIAIGRAPAERGWFDILDDWLKRDRFVFVG. Residues 32 to 53 form a helical membrane-spanning segment; the sequence is WSGILLFPCAYLALGGWLTGTT. The Lumenal portion of the chain corresponds to 54 to 108; sequence FVTSWYTHGLASSYLEGCNFLTVAVSTPANSMGHSLLLLWGPEAQGDFTRWCQLG. The helical transmembrane segment at 109–131 threads the bilayer; it reads GLWTFIALHGAFGLIGFMLRQFE. A chlorophyll a-binding site is contributed by His117. Pheophytin a is bound at residue Gln129. Topologically, residues 132–140 are cytoplasmic; it reads IARLVGVRP. A helical membrane pass occupies residues 141 to 160; sequence YNAIAFSAPIAVFVSVFLIY. Asn142 is a binding site for pheophytin a. At 161–193 the chain is on the lumenal side; that stretch reads PLGQSSWFFAPSFGVAAIFRFLLFFQGFHNWTL. A helical membrane pass occupies residues 194 to 217; that stretch reads NPFHMMGVAGVLGGALLCAIHGAT. His197 provides a ligand contact to chlorophyll a. Residues His214 and Phe261 each coordinate a plastoquinone. Residue His214 participates in Fe cation binding. The Cytoplasmic portion of the chain corresponds to 218–265; that stretch reads VENTLFQDGEGASTFRAFNPTQAEETYSMVTANRFWSQIFGIAFSNKR. The helical transmembrane segment at 266-288 threads the bilayer; that stretch reads WLHFFMLFVPVTGLWMSAIGVVG. His268 contributes to the Fe cation binding site. The Lumenal portion of the chain corresponds to 289-352; the sequence is LALNLRSYDF…EEVLPRGNAL (64 aa).

Belongs to the reaction center PufL/M/PsbA/D family. As to quaternary structure, PSII is composed of 1 copy each of membrane proteins PsbA, PsbB, PsbC, PsbD, PsbE, PsbF, PsbH, PsbI, PsbJ, PsbK, PsbL, PsbM, PsbT, PsbX, PsbY, PsbZ, Psb30/Ycf12, peripheral proteins PsbO, CyanoQ (PsbQ), PsbU, PsbV and a large number of cofactors. It forms dimeric complexes. Part of a photosystem II (PSII) assembly intermediate complex PSII-I; crystallized from a strain deleted of psbJ, it forms monomeric PSII before addition of the oxygen evolving complex. PSII-I includes 3 assembly factors not found in mature PSII (Psb27, Psb28 and Psb34). It depends on The D1/D2 heterodimer binds P680, chlorophylls that are the primary electron donor of PSII, and subsequent electron acceptors. It shares a non-heme iron and each subunit binds pheophytin, quinone, additional chlorophylls, carotenoids and lipids. There is also a Cl(-1) ion associated with D1 and D2, which is required for oxygen evolution. PSII binds additional chlorophylls, carotenoids and specific lipids. as a cofactor.

It is found in the cellular thylakoid membrane. The catalysed reaction is 2 a plastoquinone + 4 hnu + 2 H2O = 2 a plastoquinol + O2. Functionally, photosystem II (PSII) is a light-driven water:plastoquinone oxidoreductase that uses light energy to abstract electrons from H(2)O, generating O(2) and a proton gradient subsequently used for ATP formation. It consists of a core antenna complex that captures photons, and an electron transfer chain that converts photonic excitation into a charge separation. The D1/D2 (PsbA/PsbD) reaction center heterodimer binds P680, the primary electron donor of PSII as well as several subsequent electron acceptors. D2 is needed for assembly of a stable PSII complex. This chain is Photosystem II D2 protein, found in Thermosynechococcus vestitus (strain NIES-2133 / IAM M-273 / BP-1).